The primary structure comprises 282 residues: Pantothenate synthetase (282 aa).

26–33 (MGNLHEGH) is an ATP binding site. The active-site Proton donor is histidine 33. Glutamine 57 contacts (R)-pantoate. A beta-alanine-binding site is contributed by glutamine 57. 144–147 (GQKD) is an ATP binding site. (R)-pantoate is bound at residue glutamine 150. ATP-binding positions include leucine 173 and 181-184 (LSSR).

It belongs to the pantothenate synthetase family. Homodimer.

It is found in the cytoplasm. It carries out the reaction (R)-pantoate + beta-alanine + ATP = (R)-pantothenate + AMP + diphosphate + H(+). Its pathway is cofactor biosynthesis; (R)-pantothenate biosynthesis; (R)-pantothenate from (R)-pantoate and beta-alanine: step 1/1. Its function is as follows. Catalyzes the condensation of pantoate with beta-alanine in an ATP-dependent reaction via a pantoyl-adenylate intermediate. In Albidiferax ferrireducens (strain ATCC BAA-621 / DSM 15236 / T118) (Rhodoferax ferrireducens), this protein is Pantothenate synthetase.